Reading from the N-terminus, the 394-residue chain is 3-ketosteroid-9-alpha-monooxygenase, oxygenase component (394 aa).

A Rieske domain is found at 27-129 (WHCLGLAKDF…TLDQDGLLFV (103 aa)). 4 residues coordinate [2Fe-2S] cluster: Cys-68, His-70, Cys-87, and His-90. Residues Asn-175, His-181, and His-186 each contribute to the Fe cation site. Position 245 (Tyr-245) interacts with substrate. Asp-305 lines the Fe cation pocket.

Homotrimer. The two-component system 3-ketosteroid-9-alpha-monooxygenase is composed of an oxygenase component KshA and a reductase component KshB. The cofactor is [2Fe-2S] cluster. Fe cation is required as a cofactor.

The catalysed reaction is androsta-1,4-diene-3,17-dione + 2 reduced [2Fe-2S]-[ferredoxin] + O2 + 2 H(+) = 9alpha-hydroxyandrosta-1,4-diene-3,17-dione + 2 oxidized [2Fe-2S]-[ferredoxin] + H2O. In terms of biological role, may be involved in the degradation of cholic acid, a steroid acid found predominantly in the bile. In vitro, catalyzes the introduction of a 9alpha-hydroxyl moiety into the ring B of 3-ketosteroid substrates such as 1,4-androstadiene-3,17-dione (ADD), 4-androstene-3,17-dione (AD), 4-androstene-17beta-ol-3-one (testosterone), 4-pregnene-3,20-dione (progesterone), 3-oxo-23,24-bisnorcholesta-4-en-22-oate (4-BNC), 23,24-bisnorcholesta-4-ene-22-oate, 3-oxo-23,24-bisnorcholaesta-1,4-dien-22-oate (1,4-BNC), 23,24-bisnorcholesta-1,4-diene-22-oate and 3-oxo-23,24-bisnorcholesta-1,4-dien-22-oyl-coenzyme A thioester (1,4-BNC-CoA). KshA1 has the highest specificity for steroids possessing an isopropionyl side chain at C17. The sequence is that of 3-ketosteroid-9-alpha-monooxygenase, oxygenase component from Rhodococcus rhodochrous.